The following is a 158-amino-acid chain: MSKKIKIYLAGPLFTLAEINDRKQQASLIRKTFKDELPNYELDLFNPIEVNDELGANAHKPNIFFYESDIKFIDQTDIAIIDIDNTDDGTMAEMGYFVALQKHVKPTLKIYILNTDWRVHKHRNEVLNKFLDGMILSHCQYFTNFTDLLNHLLIELKK.

This is an uncharacterized protein from Ureaplasma parvum serovar 3 (strain ATCC 700970).